The primary structure comprises 579 residues: Vitamin B6 transporter TPN1 (579 aa).

The Cytoplasmic portion of the chain corresponds to 1–98 (MNRDNMDTTK…LHVAGLWLSA (98 aa)). The helical transmembrane segment at 99-119 (TGGLSSMSSFLLGPLLFGLSF) threads the bilayer. Topologically, residues 120–122 (RES) are extracellular. The helical transmembrane segment at 123–143 (VASSLISVTIGCLIAAYCSIM) threads the bilayer. Over 144-157 (GPQSGCRQMVTARY) the chain is Cytoplasmic. The chain crosses the membrane as a helical span at residues 158 to 178 (LFGWWFVKLVALASIIGVMGW). The Extracellular segment spans residues 179 to 198 (SVVNSVVGGEMLAAISNDKV). The chain crosses the membrane as a helical span at residues 199-219 (PLWVGIVIVTVCSFLVAIFGI). Residues 220–221 (KQ) lie on the Cytoplasmic side of the membrane. The helical transmembrane segment at 222-242 (VIKVETYLSVPVLTAFLLLYI) threads the bilayer. The Extracellular portion of the chain corresponds to 243–274 (SSSDKYSFVNAYVSKGNLDSSTRKGNWMSFFS). A helical membrane pass occupies residues 275–295 (LCYSITATWGSITADYYILFP). The Cytoplasmic segment spans residues 296–302 (EDTPYIQ). A helical transmembrane segment spans residues 303-323 (IFCLTFFGTFLPTCFVGILGL). Residues 324-362 (LLASVAMSYKPWSVEYDSHGMGGLLWAGFQRWNGFGKFC) lie on the Extracellular side of the membrane. A helical transmembrane segment spans residues 363-383 (VVVLVFSLVSNNIINTYSAAF). The Cytoplasmic segment spans residues 384-394 (SIQLSSVFCAK). A helical transmembrane segment spans residues 395–415 (IPRWFWSIVCTIICLVCALIG). The Extracellular segment spans residues 416–421 (RNHFST). Residues 422–442 (ILGNFLPMIGYWISMYFILLF) traverse the membrane as a helical segment. Residues 443 to 519 (EENLVFRRFF…EVLTHGYAAT (77 aa)) are Cytoplasmic-facing. The helical transmembrane segment at 520 to 540 (FAFIVGVAGVVVGMAQAYWIG) threads the bilayer. The Extracellular segment spans residues 541-545 (PIAAK). Residues 546 to 566 (FGEYGGDVAMWLSMAFSGVVY) form a helical membrane-spanning segment. Residues 567-579 (PPCRYLELRKFGR) lie on the Cytoplasmic side of the membrane.

Belongs to the purine-cytosine permease (2.A.39) family.

The protein resides in the membrane. Thiamine-regulated, high affinity import carrier of pyridoxine, pyridoxal and pyridoxamine. The chain is Vitamin B6 transporter TPN1 (TPN1) from Saccharomyces cerevisiae (strain ATCC 204508 / S288c) (Baker's yeast).